Here is an 871-residue protein sequence, read N- to C-terminus: Pentatricopeptide repeat-containing protein At3g06920 (871 aa).

21 PPR repeats span residues 97-131, 132-166, 167-201, 202-236, 237-271, 272-306, 307-341, 342-372, 376-410, 411-445, 446-480, 481-515, 516-550, 551-585, 586-620, 621-655, 656-690, 691-725, 726-760, 761-795, and 796-830; these read CPES…GFGP, SVNT…KFRP, AFSA…GYEP, TVHL…SLDA, DIVL…GLKP, DEVT…RRVP, CTYA…GSIP, SVIA…MKKD, NLST…GLFP, NVRT…VCTP, DEIT…DCRT, NSIV…NCSP, DLQL…RFVP, DARS…GCVL, DTRA…GFEP, TVVT…RIEL, NVVI…GLTP, NLYT…KCTP, NQVT…GMKP, STIS…GGVP, and DSAC…GLPI.

This sequence belongs to the PPR family. P subfamily.

In Arabidopsis thaliana (Mouse-ear cress), this protein is Pentatricopeptide repeat-containing protein At3g06920.